The following is a 69-amino-acid chain: uncharacterized protein (69 aa).

The tract at residues 22–48 (LFRKSRELSPIKPVRTPTPPAPTPPPM) is disordered. Pro residues predominate over residues 37 to 48 (TPTPPAPTPPPM).

This is an uncharacterized protein from Lepidoptera (butterflies and moths).